Reading from the N-terminus, the 487-residue chain is Sorting nexin-4 (487 aa).

A disordered region spans residues 1–59 (MDHDDFDSVSWRHGPDSDISRPTTSGTDTAESPETRRDPNGKRRMSSASEIPQAGPHAD). Polar residues predominate over residues 20 to 32 (SRPTTSGTDTAES). The region spanning 70 to 192 (VLECRVDTPI…IFLESPDWNA (123 aa)) is the PX domain. A 1,2-diacyl-sn-glycero-3-phospho-(1D-myo-inositol-3-phosphate) is bound by residues Arg-113, Thr-115, Lys-139, and Arg-158. The stretch at 395 to 430 (EQSRRERMRKLELRIDELTREVESAKTTSEMFDEEV) forms a coiled coil.

This sequence belongs to the sorting nexin family.

The protein localises to the cytoplasm. The protein resides in the cytosol. It localises to the preautophagosomal structure membrane. It is found in the endosome membrane. Sorting nexin, involved in the separation or division of vacuoles throughout the entire life cycle of the cells. Involved in retrieval of late-Golgi SNAREs from post-Golgi endosomes to the trans-Golgi network, for cytoplasm to vacuole transport (Cvt), and autophagy of large cargos including mitophagy, pexophagy and glycophagy. The polypeptide is Sorting nexin-4 (snx4) (Emericella nidulans (strain FGSC A4 / ATCC 38163 / CBS 112.46 / NRRL 194 / M139) (Aspergillus nidulans)).